The sequence spans 398 residues: 2,3,4,5-tetrahydropyridine-2,6-dicarboxylate N-succinyltransferase (398 aa).

The active-site Acyl-anhydride intermediate is E268. Residues R270, G285, S288, A311, 326–327, G334, K361, and 374–377 contribute to the succinyl-CoA site; these read DG and RQNS.

This sequence belongs to the type 2 tetrahydrodipicolinate N-succinyltransferase family. Homotrimer.

It localises to the cytoplasm. The enzyme catalyses (S)-2,3,4,5-tetrahydrodipicolinate + succinyl-CoA + H2O = (S)-2-succinylamino-6-oxoheptanedioate + CoA. It functions in the pathway amino-acid biosynthesis; L-lysine biosynthesis via DAP pathway; LL-2,6-diaminopimelate from (S)-tetrahydrodipicolinate (succinylase route): step 1/3. Its function is as follows. Catalyzes the conversion of the cyclic tetrahydrodipicolinate (THDP) into the acyclic N-succinyl-L-2-amino-6-oxopimelate using succinyl-CoA. This Sulfurimonas denitrificans (strain ATCC 33889 / DSM 1251) (Thiomicrospira denitrificans (strain ATCC 33889 / DSM 1251)) protein is 2,3,4,5-tetrahydropyridine-2,6-dicarboxylate N-succinyltransferase.